The following is a 653-amino-acid chain: Chaperone protein DnaK (653 aa).

Thr198 is modified (phosphothreonine; by autocatalysis). Residues 608–617 (DPEAAAHAAG) show a composition bias toward low complexity. The tract at residues 608 to 653 (DPEAAAHAAGMHGGAATGGGDGANKHGKGAEDVVEAEFEEVNDDKK) is disordered. Residues 618–629 (MHGGAATGGGDG) are compositionally biased toward gly residues. The span at 639-653 (DVVEAEFEEVNDDKK) shows a compositional bias: acidic residues.

It belongs to the heat shock protein 70 family.

Its function is as follows. Acts as a chaperone. This Magnetococcus marinus (strain ATCC BAA-1437 / JCM 17883 / MC-1) protein is Chaperone protein DnaK.